The primary structure comprises 669 residues: DNA ligase (669 aa).

NAD(+)-binding positions include 32-36 (DAEYD), 81-82 (SL), and Glu-111. Lys-113 (N6-AMP-lysine intermediate) is an active-site residue. Residues Arg-134, Glu-171, Lys-290, and Lys-314 each contribute to the NAD(+) site. Cys-408, Cys-411, Cys-426, and Cys-432 together coordinate Zn(2+). In terms of domain architecture, BRCT spans 591–669 (EEALSLKGQT…EAELLAILGS (79 aa)).

The protein belongs to the NAD-dependent DNA ligase family. LigA subfamily. Mg(2+) serves as cofactor. Mn(2+) is required as a cofactor.

The enzyme catalyses NAD(+) + (deoxyribonucleotide)n-3'-hydroxyl + 5'-phospho-(deoxyribonucleotide)m = (deoxyribonucleotide)n+m + AMP + beta-nicotinamide D-nucleotide.. Functionally, DNA ligase that catalyzes the formation of phosphodiester linkages between 5'-phosphoryl and 3'-hydroxyl groups in double-stranded DNA using NAD as a coenzyme and as the energy source for the reaction. It is essential for DNA replication and repair of damaged DNA. The chain is DNA ligase from Shewanella loihica (strain ATCC BAA-1088 / PV-4).